A 339-amino-acid chain; its full sequence is Fructose-1,6-bisphosphatase, cytosolic (339 aa).

Positions 70, 99, 120, 122, and 123 each coordinate Mg(2+). Substrate is bound by residues 123–126 (DGSS), N214, Y246, Y266, and K276. E282 provides a ligand contact to Mg(2+).

It belongs to the FBPase class 1 family. It depends on Mg(2+) as a cofactor.

The protein resides in the cytoplasm. The enzyme catalyses beta-D-fructose 1,6-bisphosphate + H2O = beta-D-fructose 6-phosphate + phosphate. This Brassica napus (Rape) protein is Fructose-1,6-bisphosphatase, cytosolic.